Here is a 1394-residue protein sequence, read N- to C-terminus: DNA-directed RNA polymerase subunit beta' (1394 aa).

Positions 71, 73, 86, and 89 each coordinate Zn(2+). Asp462, Asp464, and Asp466 together coordinate Mg(2+). Cys810, Cys883, Cys890, and Cys893 together coordinate Zn(2+).

Belongs to the RNA polymerase beta' chain family. In terms of assembly, the RNAP catalytic core consists of 2 alpha, 1 beta, 1 beta' and 1 omega subunit. When a sigma factor is associated with the core the holoenzyme is formed, which can initiate transcription. Mg(2+) serves as cofactor. Zn(2+) is required as a cofactor.

The catalysed reaction is RNA(n) + a ribonucleoside 5'-triphosphate = RNA(n+1) + diphosphate. In terms of biological role, DNA-dependent RNA polymerase catalyzes the transcription of DNA into RNA using the four ribonucleoside triphosphates as substrates. In Beijerinckia indica subsp. indica (strain ATCC 9039 / DSM 1715 / NCIMB 8712), this protein is DNA-directed RNA polymerase subunit beta'.